A 510-amino-acid chain; its full sequence is MCVDCKKRVRTRVAPSPTGDPHVGTAYIALFNIAFAHVNDGDFILRIEDTDRNRYTEGSEQMIFDALKWLDLDYSEGPDVGGDYGPYRQSERFDLYGKYAKELVEKGGAYYCFCDHERLENLRERQKAMGLPPGYDGHCRSLSKEEIEEKLKAGVPYVIRLKMPYEGETVIHDRLRGDVVFENSKIDDQVLLKADGYPTYHLANIVDDHLMGITHVIRAEEWIPSTPKHIQLYKAFGWEAPEFIHMPLLRNDDRSKISKRKNPVSLIWYKEEGYLKEGLVNFLGLMGYSYGDGQEIFTLQEFKDNFNIDKVTLGGPVFDLVKLGWVNNQHMKMKDLGELTRLTIPFFVNEGYLTNENVSEKEFETLKKVVGIEREGAKTLQELAKNSKFFFVDEFSLPELREDMDKKERKSVERLLNSLKDEIGLKSIKLFIEKLEKWNGNEFTAEQAKDLLHSLLDDLQEGPGKIFMPIRAVLTGESKGADLYNILYVIGKERALKRIKNIVKKYNIGI.

Positions 15-25 (PSPTGDPHVGT) match the 'HIGH' region motif. A 'KMSKS' region motif is present at residues 256-260 (KISKR). Residue Lys-259 participates in ATP binding.

This sequence belongs to the class-I aminoacyl-tRNA synthetase family. Glutamate--tRNA ligase type 1 subfamily. Monomer.

Its subcellular location is the cytoplasm. The enzyme catalyses tRNA(Glu) + L-glutamate + ATP = L-glutamyl-tRNA(Glu) + AMP + diphosphate. Its function is as follows. Catalyzes the attachment of glutamate to tRNA(Glu) in a two-step reaction: glutamate is first activated by ATP to form Glu-AMP and then transferred to the acceptor end of tRNA(Glu). This chain is Glutamate--tRNA ligase, found in Fusobacterium nucleatum subsp. nucleatum (strain ATCC 25586 / DSM 15643 / BCRC 10681 / CIP 101130 / JCM 8532 / KCTC 2640 / LMG 13131 / VPI 4355).